The following is a 283-amino-acid chain: Alpha-ketoglutarate-dependent taurine dioxygenase (283 aa).

Residues H70, Y73, and N95 each contribute to the taurine site. The Fe cation site is built by H99 and D101. Taurine is bound at residue V102. A 2-oxoglutarate-binding site is contributed by T126. 3 positions are modified to 3-hydroxytryptophan; by autocatalysis: W128, W240, and W248. H255 serves as a coordination point for Fe cation. The 2-oxoglutarate site is built by H255, R266, and R270. R270 contacts taurine.

Belongs to the TfdA dioxygenase family. Homodimer. Was later shown to be a homotetramer arranged as a dimer of two dimers. Fe(2+) serves as cofactor.

It catalyses the reaction taurine + 2-oxoglutarate + O2 = aminoacetaldehyde + sulfite + succinate + CO2 + H(+). Its pathway is organosulfur degradation; taurine degradation via aerobic pathway; aminoacetaldehyde and sulfite from taurine: step 1/1. Its activity is regulated as follows. Activated by ascorbate and inhibited by divalent metal ions such as zinc, copper and cobalt. Its function is as follows. Catalyzes the alpha-ketoglutarate-dependent hydroxylation of taurine yielding sulfite and aminoacetaldehyde after decomposition of an unstable intermediate. Is required for the utilization of taurine (2-aminoethanesulfonate) as an alternative sulfur source for growth in the absence of sulfate. To a lesser extent, pentanesulfonate, 3-(N-morpholino)propanesulfonate and 1,3-dioxo-2-isoindolineethanesulfonate are also desulfonated by this enzyme in vitro; however, desulfonation by TauD of organosulfonates other than taurine seem to be of little or no importance for sulfur metabolism in vivo. The polypeptide is Alpha-ketoglutarate-dependent taurine dioxygenase (tauD) (Escherichia coli (strain K12)).